The chain runs to 269 residues: Ribosomal RNA small subunit methyltransferase A (269 aa).

Asparagine 11, leucine 13, glycine 37, glutamate 57, aspartate 85, and asparagine 104 together coordinate S-adenosyl-L-methionine.

The protein belongs to the class I-like SAM-binding methyltransferase superfamily. rRNA adenine N(6)-methyltransferase family. RsmA subfamily.

It localises to the cytoplasm. The enzyme catalyses adenosine(1518)/adenosine(1519) in 16S rRNA + 4 S-adenosyl-L-methionine = N(6)-dimethyladenosine(1518)/N(6)-dimethyladenosine(1519) in 16S rRNA + 4 S-adenosyl-L-homocysteine + 4 H(+). Specifically dimethylates two adjacent adenosines (A1518 and A1519) in the loop of a conserved hairpin near the 3'-end of 16S rRNA in the 30S particle. May play a critical role in biogenesis of 30S subunits. The polypeptide is Ribosomal RNA small subunit methyltransferase A (Campylobacter hominis (strain ATCC BAA-381 / DSM 21671 / CCUG 45161 / LMG 19568 / NCTC 13146 / CH001A)).